The chain runs to 82 residues: Lectin-D2 (82 aa).

2 consecutive Chitin-binding type-1 domains span residues 1–42 and 43–82; these read APEC…QCDY and WRCGRDFGGRLCEEDMCCSKYGWCGYSDDHCEDGCQSQCD. Intrachain disulfides connect cysteine 4/cysteine 19, cysteine 13/cysteine 25, cysteine 18/cysteine 32, and cysteine 36/cysteine 40. Residues serine 20, tryptophan 22, tyrosine 24, and tyrosine 31 each coordinate a carbohydrate. Tryptophan 43 contributes to the a carbohydrate binding site. Disulfide bonds link cysteine 45/cysteine 60, cysteine 54/cysteine 66, cysteine 59/cysteine 73, and cysteine 77/cysteine 81. Positions 61, 63, 65, and 72 each coordinate a carbohydrate.

Monomer.

In terms of biological role, N-acetyl-D-glucosamine binding lectin. Shows no hemagglutinating activity towards rabbit erythrocytes and weak activity towards trypsin-treated erythrocytes. Has mitogenic activity towards human peripheral blood lymphocytes (HPBL). This chain is Lectin-D2, found in Phytolacca americana (American pokeweed).